The primary structure comprises 205 residues: Mitotic spindle assembly checkpoint protein MAD2A (205 aa).

An N-acetylalanine modification is found at A2. Residues S6, S130, S170, S178, S185, and S195 each carry the phosphoserine modification. In terms of domain architecture, HORMA spans 14-197 (RGSAEIVAEF…TTIHKVNSMV (184 aa)). The segment at 195–205 (SMVAYKIPVND) is required for assuming the closed conformation and for interaction with CDC20.

This sequence belongs to the MAD2 family. In terms of assembly, monomer and homodimer. Heterodimerizes with MAD2L1 in order to form a tetrameric MAD1L1-MAD2L1 core complex. In the closed and open conformation, interacts with MAD1L1. Formation of a heterotetrameric core complex containing two molecules each of MAD1L1 and of MAD2L1 promotes binding of another molecule of MAD2L1 to each MAD2L1, resulting in a heterohexamer. Interacts with MAD2L1BP. Interacts with ADAM17/TACE. Interacts with CDC20. Dimeric MAD2L1 in the closed conformation interacts with CDC20. Monomeric MAD2L1 in the open conformation does not interact with CDC20. CDC20 competes with MAD1L1 for MAD2L1 binding. In the closed conformation, interacts with BUB1B. Interacts with TTK. Interacts with TPR. Binds to UBD (via ubiquitin-like 1 domain) during mitosis. Interacts with isoform 1 and isoform 2 of NEK2. Interacts with HSF1; this interaction occurs in mitosis. Interacts with isoform 3 of MAD1L1; this interaction leads to the cytoplasmic sequestration of MAD2L1. Phosphorylated on multiple serine residues. The level of phosphorylation varies during the cell cycle and is highest during mitosis. Phosphorylation abolishes interaction with MAD1L1 and reduces interaction with CDC20. Phosphorylated by NEK2.

It localises to the nucleus. It is found in the chromosome. Its subcellular location is the centromere. The protein localises to the kinetochore. The protein resides in the cytoplasm. It localises to the cytoskeleton. It is found in the spindle pole. Component of the spindle-assembly checkpoint that prevents the onset of anaphase until all chromosomes are properly aligned at the metaphase plate. In the closed conformation (C-MAD2) forms a heterotetrameric complex with MAD1L1 at unattached kinetochores during prometaphase, the complex recruits open conformation molecules of MAD2L1 (O-MAD2) and then promotes the conversion of O-MAD2 to C-MAD2. Required for the execution of the mitotic checkpoint which monitors the process of kinetochore-spindle attachment and inhibits the activity of the anaphase promoting complex by sequestering CDC20 until all chromosomes are aligned at the metaphase plate. In Homo sapiens (Human), this protein is Mitotic spindle assembly checkpoint protein MAD2A (MAD2L1).